Here is a 122-residue protein sequence, read N- to C-terminus: Large ribosomal subunit protein eL22B (122 aa).

It belongs to the eukaryotic ribosomal protein eL22 family. In terms of assembly, component of the large ribosomal subunit (LSU). Mature yeast ribosomes consist of a small (40S) and a large (60S) subunit. The 40S small subunit contains 1 molecule of ribosomal RNA (18S rRNA) and 33 different proteins (encoded by 57 genes). The large 60S subunit contains 3 rRNA molecules (25S, 5.8S and 5S rRNA) and 46 different proteins (encoded by 81 genes).

It localises to the cytoplasm. Functionally, component of the ribosome, a large ribonucleoprotein complex responsible for the synthesis of proteins in the cell. The small ribosomal subunit (SSU) binds messenger RNAs (mRNAs) and translates the encoded message by selecting cognate aminoacyl-transfer RNA (tRNA) molecules. The large subunit (LSU) contains the ribosomal catalytic site termed the peptidyl transferase center (PTC), which catalyzes the formation of peptide bonds, thereby polymerizing the amino acids delivered by tRNAs into a polypeptide chain. The nascent polypeptides leave the ribosome through a tunnel in the LSU and interact with protein factors that function in enzymatic processing, targeting, and the membrane insertion of nascent chains at the exit of the ribosomal tunnel. This is Large ribosomal subunit protein eL22B from Saccharomyces cerevisiae (strain ATCC 204508 / S288c) (Baker's yeast).